Consider the following 384-residue polypeptide: G protein-coupled receptor 88 (384 aa).

Over Met-1–Ser-35 the chain is Extracellular. A glycan (N-linked (GlcNAc...) asparagine) is linked at Asn-3. A helical transmembrane segment spans residues Leu-36–Val-56. The Cytoplasmic segment spans residues Ser-57–Gly-73. A helical membrane pass occupies residues Cys-74–Leu-94. The Extracellular segment spans residues Pro-95 to Arg-116. The chain crosses the membrane as a helical span at residues Gly-117 to Leu-136. Over Asn-137–Thr-158 the chain is Cytoplasmic. The helical transmembrane segment at Ala-159–Trp-179 threads the bilayer. Residues Ala-180–Leu-195 lie on the Extracellular side of the membrane. A helical membrane pass occupies residues Leu-196–Val-216. The Cytoplasmic portion of the chain corresponds to Arg-217–Ser-285. A helical membrane pass occupies residues Val-286 to Ala-306. Residues Ser-307–Ser-310 lie on the Extracellular side of the membrane. A helical membrane pass occupies residues Leu-311 to Leu-331. The Cytoplasmic segment spans residues Asn-332 to Trp-384.

This sequence belongs to the G-protein coupled receptor 1 family. Expressed predominantly in the striatum. Expressed also in olfactory tubercle, nucleus accumbens, amygdala, and neocortex. Spinal cord, pons, and medulla expression remains discrete. Also expressed in peripheral tissues, including adrenal cortex (16 dpc to 21 dpc) and cochlear ganglia (19 dpc to P3) and also at moderate levels in retina (18 dpc to 19 dpc) and spleen (21 dpc to P7).

Its subcellular location is the cell membrane. It is found in the cell projection. The protein resides in the cilium membrane. It localises to the cytoplasm. The protein localises to the nucleus. Orphan G protein-coupled receptor implicated in a large repertoire of behavioral responses that engage motor activities, spatial learning, and emotional processing. May play a role in the regulation of cognitive and motor function. Couples with the heterotrimeric G protein complex of the G(i) subfamily, consisting of GNAI1, GNB1 and GNG2, thereby acting through a G(i)-mediated pathway. Plays a role in the attenuation of D1 dopamine receptor (D1R)-mediated cAMP response in ciliated cells. In non-ciliated cells, involved in the inhibition of the beta-2 adrenergic receptor (B2AR) response. This Rattus norvegicus (Rat) protein is G protein-coupled receptor 88 (Gpr88).